The following is a 147-amino-acid chain: 3-hydroxyacyl-[acyl-carrier-protein] dehydratase FabZ (147 aa).

His-53 is a catalytic residue.

This sequence belongs to the thioester dehydratase family. FabZ subfamily.

It localises to the cytoplasm. The catalysed reaction is a (3R)-hydroxyacyl-[ACP] = a (2E)-enoyl-[ACP] + H2O. Its function is as follows. Involved in unsaturated fatty acids biosynthesis. Catalyzes the dehydration of short chain beta-hydroxyacyl-ACPs and long chain saturated and unsaturated beta-hydroxyacyl-ACPs. This is 3-hydroxyacyl-[acyl-carrier-protein] dehydratase FabZ from Synechococcus sp. (strain WH7803).